We begin with the raw amino-acid sequence, 209 residues long: Protein-L-isoaspartate O-methyltransferase (209 aa).

Serine 60 is an active-site residue.

This sequence belongs to the methyltransferase superfamily. L-isoaspartyl/D-aspartyl protein methyltransferase family.

The protein resides in the cytoplasm. The enzyme catalyses [protein]-L-isoaspartate + S-adenosyl-L-methionine = [protein]-L-isoaspartate alpha-methyl ester + S-adenosyl-L-homocysteine. Its function is as follows. Catalyzes the methyl esterification of L-isoaspartyl residues in peptides and proteins that result from spontaneous decomposition of normal L-aspartyl and L-asparaginyl residues. It plays a role in the repair and/or degradation of damaged proteins. This is Protein-L-isoaspartate O-methyltransferase from Photobacterium profundum (strain SS9).